The chain runs to 933 residues: MSLNTLANIVPEKDTSLEKDHPLREDIRLLGRMLGDTIRELEGEPMFDLVETIRQTAVRFRREQDEEAGKELDTILNHLSHKETTAVVRAFSYFSLLSNIAEDLHHNRRRRAHLRAGSPPQDGSVTLALERVVAKGINTQQLENFFAEALISPVLTAHPTEVQRRSILDYQLKIQRLLKERDRTQLTPNELRHNEEDLRSAIQTLWQTRVLRSVRLTVQDEIENGLIYYHYTFLKQIPYIYAKIEDILERHMDKAAPCIASFLRIGSWIGGDRDGNPFVTHQIMLHAAERHSALILDYYIEEVEKIGQAMSLTERLIKVTSELEGLASTAPGLPASRIDEPYRRVFLGMHTRLIATSRYLSPHVGRQYQENTAEPYADSAEFVHDLDIVIRSLKQHQSNKLAQGAIRDLRRAVDVFGFHLASLDMRQHSKIHEQVVSELYEKNAQDNRNYPDLTRAERAEWLLAELKRSHPLVSSLSDYSDITQGELRILRMAAEIQRRFGHVALPNYIISMATGVIHILEAALLLKEAGLLQFGEAARSTVNIIPLFETIDDLRGCANVMEELFSLPEYRKMLRSRSNLQEVMLGYSDSNKDGGFVTSNWEIHKAEIELTKVFNRHGVRLRLFHGRGGTVGRGGGPSYQGILAQPPGSVNGQIRLTEQGEVIASKYTDPEIGRRNLETLVAATIESTLLDRDAIHCHTPQCYQIMEELSASAYAAYRDLVYKTPNFTQFFQESTPIREIAGLHIGSRPTSRKPSNKIEDLRTIPWVFSWSLNRTMIPGWYGFGTAVENFVQQAGNTQDVLIQMQKMYRTWPFFQTLLSNMDMVLAKSDLGIASRYAELVTDSELRQYVFTAIRTEWELCVKWLFAITGHTELLQDNPTLARSIRIRTPYIDPMNHLQVELLRRYRSGDDDDAIRRAIHLTINGVATGLRNSG.

Residues His158 and Lys592 contribute to the active site.

The protein belongs to the PEPCase type 1 family. Mg(2+) serves as cofactor.

It carries out the reaction oxaloacetate + phosphate = phosphoenolpyruvate + hydrogencarbonate. Functionally, forms oxaloacetate, a four-carbon dicarboxylic acid source for the tricarboxylic acid cycle. The polypeptide is Phosphoenolpyruvate carboxylase (Nitrosomonas eutropha (strain DSM 101675 / C91 / Nm57)).